A 371-amino-acid chain; its full sequence is tRNA-specific 2-thiouridylase MnmA (371 aa).

ATP is bound by residues 12–19 (GMSGGVDS) and M38. The interval 98–100 (NPD) is interaction with target base in tRNA. Residue C103 is the Nucleophile of the active site. A disulfide bond links C103 and C200. ATP is bound at residue G127. The interaction with tRNA stretch occupies residues 150–152 (KDQ). C200 serves as the catalytic Cysteine persulfide intermediate. Residues 308-309 (RY) form an interaction with tRNA region.

It belongs to the MnmA/TRMU family.

The protein resides in the cytoplasm. It catalyses the reaction S-sulfanyl-L-cysteinyl-[protein] + uridine(34) in tRNA + AH2 + ATP = 2-thiouridine(34) in tRNA + L-cysteinyl-[protein] + A + AMP + diphosphate + H(+). Catalyzes the 2-thiolation of uridine at the wobble position (U34) of tRNA, leading to the formation of s(2)U34. The polypeptide is tRNA-specific 2-thiouridylase MnmA (Oceanobacillus iheyensis (strain DSM 14371 / CIP 107618 / JCM 11309 / KCTC 3954 / HTE831)).